Reading from the N-terminus, the 261-residue chain is Ribosome-inactivating protein PD-L1/PD-L2 (261 aa).

Asn-10 and Asn-43 each carry an N-linked (GlcNAc...) asparagine; in PD-L1 and PD-L2 glycan. Disulfide bonds link Cys-34/Cys-258 and Cys-84/Cys-105. The active site involves Tyr-72. Val-73 contacts substrate. Ser-120 contacts substrate. Residues Tyr-122, Glu-175, and Arg-178 contribute to the active site. Residue Arg-178 participates in substrate binding. A glycan (N-linked (GlcNAc...) asparagine; in PD-L1) is linked at Asn-255.

The protein belongs to the ribosome-inactivating protein family. Type 1 RIP subfamily. In terms of processing, N-glycosylated. Loss of glycosylation does not affect DNA-cleaving ability. Loss of glycosylation does not affect protein synthesis inhibition, but increases adenine polynucleotide glycosidase activity likely as a consequence of the increased accessibility of substrates to the active site pocket in the absence of glycosylation. In terms of tissue distribution, expressed in leaves (at protein level).

It carries out the reaction Endohydrolysis of the N-glycosidic bond at one specific adenosine on the 28S rRNA.. Inhibits protein synthesis. Has adenine polynucleotide glycosidase activity on herring sperm (hs)DNA and poly(A) substrates. Cleaves supercoiled pBR322 dsDNA. In Phytolacca dioica (Bella sombra tree), this protein is Ribosome-inactivating protein PD-L1/PD-L2.